Here is a 249-residue protein sequence, read N- to C-terminus: Basic leucine zipper 23 (249 aa).

The disordered stretch occupies residues 66-90 (KVSTDDTSESSGKKRPLGNREAVRK). The region spanning 74-121 (ESSGKKRPLGNREAVRKYREKKKAKAASLEDEVMRLKAVNNQLLKRLQ) is the bZIP domain. Residues 78-98 (KKRPLGNREAVRKYREKKKAK) form a basic motif region. The leucine-zipper stretch occupies residues 102–116 (LEDEVMRLKAVNNQL).

The protein localises to the nucleus. Transcription factor involved in the response to zinc ion deficiency. Binds to the consensus sequence 5'-[AG]TGTCGACA[CT]-3' also called zinc deficiency response element (ZDRE). The ZDRE sequence is conserved in the plant kingdom and present in the promoters of genes that constitute the primary response to zinc deficiency, comprising additional ZIP metal transporter genes. Required for zinc accumulation in roots. Mediates the expression of the zinc transporter ZIP12 during growth in zinc-deficient conditions. ZIP12 transporter is involved in zinc uptake in roots. The protein is Basic leucine zipper 23 of Arabidopsis thaliana (Mouse-ear cress).